The following is a 311-amino-acid chain: Pyrimidine-specific ribonucleoside hydrolase RihA (311 aa).

Residue His-240 is part of the active site.

Belongs to the IUNH family. RihA subfamily.

Hydrolyzes with equal efficiency cytidine or uridine to ribose and cytosine or uracil, respectively. In Escherichia coli (strain K12 / MC4100 / BW2952), this protein is Pyrimidine-specific ribonucleoside hydrolase RihA.